Consider the following 1019-residue polypeptide: Photoactivated adenylate cyclase subunit alpha-like protein FB (1019 aa).

Residues 55–148 (LRRLMYLSAS…GRLYGEWHMK (94 aa)) enclose the BLUF 1 domain. Residues 204–332 (VVTFIYLVEF…DCINTASRIT (129 aa)) form the Guanylate cyclase 1 domain. The region spanning 467–559 (LITLTYISQA…REYGSPLDMT (93 aa)) is the BLUF 2 domain. The region spanning 615–744 (VLLATDICSF…EVSARVMEVV (130 aa)) is the Guanylate cyclase 2 domain. The span at 825–839 (APGRGAPAGGIPSSP) shows a compositional bias: low complexity. The segment at 825–862 (APGRGAPAGGIPSSPKVRPPGRTNSVSSYTPDPNEALD) is disordered. Over residues 846-855 (RTNSVSSYTP) the composition is skewed to polar residues.

It belongs to the adenylyl cyclase class-4/guanylyl cyclase family. As to quaternary structure, heterotetramer of two alpha and two beta subunits.

It localises to the cell projection. Its subcellular location is the cilium. It is found in the flagellum. This Euglena gracilis protein is Photoactivated adenylate cyclase subunit alpha-like protein FB.